A 748-amino-acid polypeptide reads, in one-letter code: tRNA endonuclease ANKZF1 (748 aa).

The segment at 96–120 adopts a C2H2-type zinc-finger fold; that stretch reads LFCSACDQIFQNHQEQREHYKLDWH. Positions 135–185 are disordered; that stretch reads SASDFEQQSSTGDLSSISGSDDTDSSSEEDLLPLDEGRAESEKPNRPPGFY. The segment covering 143-154 has biased composition (low complexity); it reads SSTGDLSSISGS. The segment covering 155–167 has biased composition (acidic residues); it reads DDTDSSSEEDLLP. Positions 169 to 179 are enriched in basic and acidic residues; it reads DEGRAESEKPN. The region spanning 227–370 is the VLRF1 domain; sequence GPRYYVVLMA…QRVLHKLTTL (144 aa). Residue Q270 is part of the active site. S282 and S385 each carry phosphoserine. Basic and acidic residues predominate over residues 383–408; it reads FHSPETHWKPVREERKKDTEKEKTKV. 2 disordered regions span residues 383–438 and 460–497; these read FHSP…SEVE and RRRR…TQEV. Over residues 429-438 the composition is skewed to acidic residues; sequence SQEEDGSEVE. The segment covering 484 to 497 has biased composition (polar residues); that stretch reads QPQDEPFSQPTQEV. Residues 515-545 form an ANK 1 repeat; the sequence is ELWDTLLAACRAGEVEVLKLQLATGLVDPGV. S555 carries the post-translational modification Phosphoserine. An ANK 2 repeat occupies 556-585; the sequence is GGFTLLHAAAAAGRGLVVRLLLEAGADPTV. A disordered region spans residues 621–677; it reads KARVPGPLTQEMEARQATRKKEQKAARRQREQQQRKQREQEEQEQEEQRRFAALSDR. Positions 628 to 681 form a coiled coil; that stretch reads LTQEMEARQATRKKEQKAARRQREQQQRKQREQEEQEQEEQRRFAALSDREKRA. Position 629 is a phosphothreonine (T629). Positions 632–677 are enriched in basic and acidic residues; the sequence is MEARQATRKKEQKAARRQREQQQRKQREQEEQEQEEQRRFAALSDR. The VCP/p97-interacting motif (VIM) stretch occupies residues 654-666; the sequence is QRKQREQEEQEQE. Residue S702 is modified to Phosphoserine.

This sequence belongs to the ANKZF1/VMS1 family. In terms of assembly, interacts (via VIM motif) with VCP.

Its subcellular location is the cytoplasm. In terms of biological role, endonuclease that cleaves polypeptidyl-tRNAs downstream of the ribosome-associated quality control (RQC) pathway to release incompletely synthesized polypeptides for degradation. The RQC pathway disassembles aberrantly stalled translation complexes to recycle or degrade the constituent parts. ANKZF1 acts downstream disassembly of stalled ribosomes and specifically cleaves off the terminal 3'-CCA nucleotides universal to all tRNAs from polypeptidyl-tRNAs, releasing (1) ubiquitinated polypeptides from 60S ribosomal subunit for degradation and (2) cleaved tRNAs. ANKZF1-cleaved tRNAs are then repaired and recycled by ELAC1 and TRNT1. Also plays a role in the cellular response to hydrogen peroxide and in the maintenance of mitochondrial integrity under conditions of cellular stress. In Mus musculus (Mouse), this protein is tRNA endonuclease ANKZF1.